We begin with the raw amino-acid sequence, 443 residues long: Ribulose bisphosphate carboxylase large chain (443 aa).

Asn89 and Thr139 together coordinate substrate. The active-site Proton acceptor is Lys141. Position 143 (Lys143) interacts with substrate. Mg(2+) is bound by residues Lys167, Asp169, and Glu170. Position 167 is an N6-carboxylysine (Lys167). His260 (proton acceptor) is an active-site residue. Residues Arg261, His293, and Ser345 each contribute to the substrate site.

This sequence belongs to the RuBisCO large chain family. Type I subfamily. In terms of assembly, heterohexadecamer of 8 large chains and 8 small chains; disulfide-linked. The disulfide link is formed within the large subunit homodimers. Mg(2+) is required as a cofactor. Post-translationally, the disulfide bond which can form in the large chain dimeric partners within the hexadecamer appears to be associated with oxidative stress and protein turnover.

Its subcellular location is the plastid. The protein resides in the chloroplast. The enzyme catalyses 2 (2R)-3-phosphoglycerate + 2 H(+) = D-ribulose 1,5-bisphosphate + CO2 + H2O. The catalysed reaction is D-ribulose 1,5-bisphosphate + O2 = 2-phosphoglycolate + (2R)-3-phosphoglycerate + 2 H(+). Functionally, ruBisCO catalyzes two reactions: the carboxylation of D-ribulose 1,5-bisphosphate, the primary event in carbon dioxide fixation, as well as the oxidative fragmentation of the pentose substrate in the photorespiration process. Both reactions occur simultaneously and in competition at the same active site. This Callitriche heterophylla (Large water-starwort) protein is Ribulose bisphosphate carboxylase large chain.